The chain runs to 452 residues: Sodium-coupled neutral amino acid transporter 7 (452 aa).

The next 11 helical transmembrane spans lie at 46–66 (AVFIVVNAALGAGLLNFPAAF), 74–94 (AAISLQLVLLLFIISGLVILA), 120–140 (LCEVLIAVYTFGTCIAFFIII), 168–188 (FTISVTGVLLILPLSLPREIS), 195–215 (FLSVLGTCYVTVVVVVRCIWP), 234–256 (VFNAVPTICFGYQCHVSSVPVYG), 272–292 (IAMFIALCVYTGTGVCGFLLF), 309–329 (IAVAVARAFIILCVLTSYPIL), 361–381 (VLQTVIWFLLTLLLALFIPDI), 385–405 (ISLIGGLAACFIFIFPGLCLI), and 419–439 (SWWALLSYGVIMVTIGTFIFG).

The protein belongs to the amino acid/polyamine transporter 2 family.

The protein resides in the lysosome membrane. It is found in the cell projection. It localises to the axon. It catalyses the reaction L-asparagine(in) + Na(+)(in) = L-asparagine(out) + Na(+)(out). It carries out the reaction L-glutamine(in) + Na(+)(in) = L-glutamine(out) + Na(+)(out). In terms of biological role, symporter that selectively cotransports sodium ions and amino acids, such as L-glutamine and L-asparagine from the lysosome into the cytoplasm and may participates in mTORC1 activation. The transport activity requires an acidic lysosomal lumen. The chain is Sodium-coupled neutral amino acid transporter 7 from Xenopus laevis (African clawed frog).